The chain runs to 347 residues: Selenide, water dikinase (347 aa).

Cysteine 17 is an active-site residue. ATP contacts are provided by residues lysine 20 and 48 to 50 (TRD). Mg(2+) is bound at residue aspartate 51. ATP is bound by residues aspartate 68, aspartate 91, and 139-141 (GHS). Mg(2+) is bound at residue aspartate 91. Residue aspartate 227 participates in Mg(2+) binding.

It belongs to the selenophosphate synthase 1 family. Class I subfamily. Homodimer. The cofactor is Mg(2+).

It carries out the reaction hydrogenselenide + ATP + H2O = selenophosphate + AMP + phosphate + 2 H(+). Its function is as follows. Synthesizes selenophosphate from selenide and ATP. In Cronobacter sakazakii (strain ATCC BAA-894) (Enterobacter sakazakii), this protein is Selenide, water dikinase.